We begin with the raw amino-acid sequence, 518 residues long: Protein nucleotidyltransferase YdiU (518 aa).

Residues 1-22 are disordered; the sequence is MTHLQFDNRLRAELPGDPEEGP. Residues G100, G102, R103, K123, D135, G136, R193, and R200 each coordinate ATP. D270 functions as the Proton acceptor in the catalytic mechanism. Mg(2+)-binding residues include N271 and D280. D280 provides a ligand contact to ATP.

This sequence belongs to the SELO family. The cofactor is Mg(2+). Mn(2+) serves as cofactor.

It carries out the reaction L-seryl-[protein] + ATP = 3-O-(5'-adenylyl)-L-seryl-[protein] + diphosphate. It catalyses the reaction L-threonyl-[protein] + ATP = 3-O-(5'-adenylyl)-L-threonyl-[protein] + diphosphate. The enzyme catalyses L-tyrosyl-[protein] + ATP = O-(5'-adenylyl)-L-tyrosyl-[protein] + diphosphate. The catalysed reaction is L-histidyl-[protein] + UTP = N(tele)-(5'-uridylyl)-L-histidyl-[protein] + diphosphate. It carries out the reaction L-seryl-[protein] + UTP = O-(5'-uridylyl)-L-seryl-[protein] + diphosphate. It catalyses the reaction L-tyrosyl-[protein] + UTP = O-(5'-uridylyl)-L-tyrosyl-[protein] + diphosphate. In terms of biological role, nucleotidyltransferase involved in the post-translational modification of proteins. It can catalyze the addition of adenosine monophosphate (AMP) or uridine monophosphate (UMP) to a protein, resulting in modifications known as AMPylation and UMPylation. This is Protein nucleotidyltransferase YdiU from Xanthomonas campestris pv. campestris (strain 8004).